The following is a 324-amino-acid chain: Polycomb complex protein BMI-1-B (324 aa).

An RING-type zinc finger spans residues 18–57; that stretch reads CVLCGGYFIDATTIVECLHSFCKMCIVRYLETSKYCPICD. Residues 81–95 carry the Nuclear localization signal motif; sequence KLVPGLFKNEMKRRR. Residues 232–324 form a disordered region; the sequence is IKLSSPRNDM…TSHNGSNSLG (93 aa). Over residues 256-279 the composition is skewed to low complexity; the sequence is DKPNSPSIVAAPSTSSSMPSPNTP. 2 stretches are compositionally biased toward polar residues: residues 280–295 and 303–324; these read VQSTHPSFPHISTING and NGQTPFSSKVCKTSHNGSNSLG.

As to quaternary structure, component of a PRC1-like complex. Homodimer. Interacts with cbx2.

The protein resides in the nucleus. In terms of biological role, component of a Polycomb group (PcG) multiprotein PRC1-like complex, a complex class required to maintain the transcriptionally repressive state of many genes, including Hox genes, throughout development. PcG PRC1 complex acts via chromatin remodeling and modification of histones; it mediates monoubiquitination of histone H2A 'Lys-119', rendering chromatin heritably changed in its expressibility. In the PRC1 complex, it is required to stimulate the E3 ubiquitin-protein ligase activity of rnf2. The polypeptide is Polycomb complex protein BMI-1-B (bmi1b) (Danio rerio (Zebrafish)).